An 881-amino-acid chain; its full sequence is EEF1AKMT4-ECE2 readthrough transcript protein (881 aa).

The segment at 1-160 (MASPRTPVSP…VHTVDQVLSE (160 aa)) is methyltransferase-like region. Over 1–178 (MASPRTPVSP…QLFGSHTQLE (178 aa)) the chain is Cytoplasmic. The S-adenosyl-L-methionine site is built by Trp-26 and Tyr-30. Tyr-39 is modified (phosphotyrosine). Residues Trp-41, Gly-66, 88-89 (DY), 113-114 (DV), and Lys-130 each bind S-adenosyl-L-methionine. Position 174 is a phosphoserine (His-174). Residues 179–199 (LVLAGLILVLAALLLGCLVAL) form a helical; Signal-anchor for type II membrane protein membrane-spanning segment. Residues 200–881 (WVHRDPAHST…MNPGQLCEVW (682 aa)) lie on the Lumenal side of the membrane. In terms of domain architecture, Peptidase M13 spans 209–881 (TCVTEACIRV…MNPGQLCEVW (673 aa)). 5 cysteine pairs are disulfide-bonded: Cys-210-Cys-215, Cys-233-Cys-866, Cys-241-Cys-826, Cys-297-Cys-546, and Cys-755-Cys-878. Asn-277, Asn-281, Asn-322, Asn-382, Asn-427, Asn-494, and Asn-650 each carry an N-linked (GlcNAc...) asparagine glycan. Position 718 (His-718) interacts with Zn(2+). Glu-719 is an active-site residue. His-722 lines the Zn(2+) pocket. Asn-743 and Asn-751 each carry an N-linked (GlcNAc...) asparagine glycan. Glu-778 is a binding site for Zn(2+). Asp-782 functions as the Proton donor in the catalytic mechanism.

It in the N-terminal section; belongs to the methyltransferase superfamily. This sequence in the C-terminal section; belongs to the peptidase M13 family. The cofactor is Zn(2+). In terms of tissue distribution, expressed at high levels in central nervous system. Expressed in adrenal glands, ovary and uterus, and at low levels in heart.

It localises to the golgi apparatus membrane. The protein localises to the cytoplasmic vesicle. The protein resides in the secretory vesicle membrane. The enzyme catalyses Hydrolysis of the 21-Trp-|-Val-22 bond in big endothelin to form endothelin 1.. Inhibited by phosphoramidon. Its function is as follows. Converts big endothelin-1 to endothelin-1. May also have methyltransferase activity. May play a role in amyloid-beta processing. This chain is EEF1AKMT4-ECE2 readthrough transcript protein, found in Mus musculus (Mouse).